The primary structure comprises 102 residues: Protein translation factor SUI1 homolog (102 aa).

This sequence belongs to the SUI1 family.

The protein is Protein translation factor SUI1 homolog of Nitrosopumilus maritimus (strain SCM1).